The following is a 299-amino-acid chain: ATP synthase gamma chain (299 aa).

Belongs to the ATPase gamma chain family. In terms of assembly, F-type ATPases have 2 components, CF(1) - the catalytic core - and CF(0) - the membrane proton channel. CF(1) has five subunits: alpha(3), beta(3), gamma(1), delta(1), epsilon(1). CF(0) has three main subunits: a, b and c.

It is found in the cell inner membrane. Functionally, produces ATP from ADP in the presence of a proton gradient across the membrane. The gamma chain is believed to be important in regulating ATPase activity and the flow of protons through the CF(0) complex. This Rhodospirillum rubrum protein is ATP synthase gamma chain.